Consider the following 1064-residue polypeptide: Phosphatidylinositol 4,5-bisphosphate 3-kinase catalytic subunit beta isoform (1064 aa).

The PI3K-ABD domain occupies 20-109; sequence SDGAISVDFL…LPVLKLVTRS (90 aa). A PI3K-RBD domain is found at 188–279; the sequence is GGKLVVAVHF…RTLPHFILVE (92 aa). Residue Ser-318 is modified to Phosphoserine. In terms of domain architecture, C2 PI3K-type spans 323–490; sequence NNNPFQITLV…NATALHITFP (168 aa). The Nuclear localization signal (NLS) signature appears at 404-412; the sequence is KVKTKKSTK. Residues 518 to 695 enclose the PIK helical domain; it reads ANVSSRGGKK…GVILEAYCRG (178 aa). Positions 766–1047 constitute a PI3K/PI4K catalytic domain; the sequence is YVEKCKYMDS…KFDEALRESW (282 aa). A G-loop region spans residues 772-778; that stretch reads YMDSKMK. A catalytic loop region spans residues 910-918; it reads GIGDRHSDN. The interval 929–955 is activation loop; it reads HIDFGHILGNFKSKFGIKRERVPFILT. Ser-1064 carries the post-translational modification Phosphoserine; by autocatalysis.

The protein belongs to the PI3/PI4-kinase family. In terms of assembly, heterodimer of a catalytic subunit PIK3CB and a p85 regulatory subunit (PIK3R1, PIK3R2 or PIK3R3). Interaction with PIK3R2 is required for nuclear localization and nuclear export. Part of a complex with PIK3R1 and PTEN. Binding to PTEN may antagonize the lipid kinase activity under normal growth conditions. Part of a complex involved in autophagosome formation composed of PIK3C3 and PIK3R4. Interacts with BECN1, ATG14 and RAB5A. Phosphorylation at Ser-1064 down-regulates lipid kinase activity. In terms of processing, autophosphorylation at Ser-1064 negatively regulates the phosphatidylinositol-4,5-bisphosphate 3-kinase activity.

Its subcellular location is the cytoplasm. The protein resides in the nucleus. It catalyses the reaction a 1,2-diacyl-sn-glycero-3-phospho-(1D-myo-inositol-4,5-bisphosphate) + ATP = a 1,2-diacyl-sn-glycero-3-phospho-(1D-myo-inositol-3,4,5-trisphosphate) + ADP + H(+). The catalysed reaction is 1-octadecanoyl-2-(5Z,8Z,11Z,14Z)-eicosatetraenoyl-sn-glycero-3-phospho-1D-myo-inositol 4,5-bisphosphate + ATP = 1-octadecanoyl-2-(5Z,8Z,11Z,14Z-eicosatetraenoyl)-sn-glycero-3-phospho-(1D-myo-inositol 3,4,5-triphosphate) + ADP + H(+). The enzyme catalyses L-seryl-[protein] + ATP = O-phospho-L-seryl-[protein] + ADP + H(+). The protein operates within phospholipid metabolism; phosphatidylinositol phosphate biosynthesis. In terms of biological role, phosphoinositide-3-kinase (PI3K) phosphorylates phosphatidylinositol (PI) derivatives at position 3 of the inositol ring to produce 3-phosphoinositides. Uses ATP and PtdIns(4,5)P2 (phosphatidylinositol 4,5-bisphosphate) to generate phosphatidylinositol 3,4,5-trisphosphate (PIP3). PIP3 plays a key role by recruiting PH domain-containing proteins to the membrane, including AKT1 and PDPK1, activating signaling cascades involved in cell growth, survival, proliferation, motility and morphology. Involved in the activation of AKT1 upon stimulation by G-protein coupled receptors (GPCRs) ligands such as CXCL12, sphingosine 1-phosphate, and lysophosphatidic acid. May also act downstream receptor tyrosine kinases. Required in different signaling pathways for stable platelet adhesion and aggregation. Plays a role in platelet activation signaling triggered by GPCRs, alpha-IIb/beta-3 integrins (ITGA2B/ ITGB3) and ITAM (immunoreceptor tyrosine-based activation motif)-bearing receptors such as GP6. Regulates the strength of adhesion of ITGA2B/ ITGB3 activated receptors necessary for the cellular transmission of contractile forces. Required for platelet aggregation induced by F2 (thrombin) and thromboxane A2 (TXA2). Has a role in cell survival. May have a role in cell migration. Involved in the early stage of autophagosome formation. Modulates the intracellular level of PtdIns3P (phosphatidylinositol 3-phosphate) and activates PIK3C3 kinase activity. May act as a scaffold, independently of its lipid kinase activity to positively regulate autophagy. May have a role in insulin signaling as scaffolding protein in which the lipid kinase activity is not required. May have a kinase-independent function in regulating cell proliferation and in clathrin-mediated endocytosis. Mediator of oncogenic signal in cell lines lacking PTEN. The lipid kinase activity is necessary for its role in oncogenic transformation. Required for the growth of ERBB2 and RAS driven tumors. Also has a protein kinase activity showing autophosphorylation. The sequence is that of Phosphatidylinositol 4,5-bisphosphate 3-kinase catalytic subunit beta isoform (Pik3cb) from Mus musculus (Mouse).